The chain runs to 454 residues: MISAFDIFKIGIGPSSSHTVGPMNAGKSFIDRLESSGLLTATSHIVVDLYGSLSLTGKGHATDVAIIMGLAGNSPQDVVIDEIPAFIELVTRSGRLPVASGAHIVDFPVAKNIIFHPEMLPRHENGMRITAWKGQEELLSKTYYSVGGGFIVEEEHFGLSHDVETSVPYDFHSAGELLKMCDYNGLSISGLMMHNELALRSKAEIDAGFARIWQVMHDGIERGMNTEGVLPGPLNVPRRAVALRRQLVSSDNISNDPMNVIDWINMYALAVSEENAAGGRVVTAPTNGACGIIPAVLAYYDKFRRPVNERSIARYFLAAGAIGALYKMNASISGAEVGCQGEIGVACSMAAAGLTELLGGSPAQVCNAAEIAMEHNLGLTCDPVAGQVQIPCIERNAINAVKAVNAARMAMRRTSAPRVSLDKVIETMYETGKDMNDKYRETSRGGLAIKVVCG.

The protein belongs to the iron-sulfur dependent L-serine dehydratase family. It depends on [4Fe-4S] cluster as a cofactor.

The catalysed reaction is L-serine = pyruvate + NH4(+). Its pathway is amino-acid degradation; L-threonine degradation via propanoate pathway. The protein is L-serine dehydratase TdcG (tdcG) of Escherichia coli (strain K12).